The primary structure comprises 260 residues: Methyl-coenzyme M reductase subunit gamma (260 aa).

Arg123 is a binding site for coenzyme M.

It belongs to the methyl-coenzyme M reductase gamma subunit family. As to quaternary structure, MCR is a hexamer of two alpha, two beta, and two gamma chains, forming a dimer of heterotrimers. It depends on coenzyme F430 as a cofactor.

The protein resides in the cytoplasm. It catalyses the reaction coenzyme B + methyl-coenzyme M = methane + coenzyme M-coenzyme B heterodisulfide. The protein operates within one-carbon metabolism; methyl-coenzyme M reduction; methane from methyl-coenzyme M: step 1/1. Component of the methyl-coenzyme M reductase (MCR) I that catalyzes the reductive cleavage of methyl-coenzyme M (CoM-S-CH3 or 2-(methylthio)ethanesulfonate) using coenzyme B (CoB or 7-mercaptoheptanoylthreonine phosphate) as reductant which results in the production of methane and the mixed heterodisulfide of CoB and CoM (CoM-S-S-CoB). This is the final step in methanogenesis. In Methanococcus vannielii, this protein is Methyl-coenzyme M reductase subunit gamma (mcrG).